Reading from the N-terminus, the 422-residue chain is Serine--tRNA ligase (422 aa).

230 to 232 (TAE) provides a ligand contact to L-serine. An ATP-binding site is contributed by 261 to 263 (RNE). An L-serine-binding site is contributed by E284. 347–350 (EVSS) lines the ATP pocket. S383 serves as a coordination point for L-serine.

This sequence belongs to the class-II aminoacyl-tRNA synthetase family. Type-1 seryl-tRNA synthetase subfamily. As to quaternary structure, homodimer. The tRNA molecule binds across the dimer.

It is found in the cytoplasm. The enzyme catalyses tRNA(Ser) + L-serine + ATP = L-seryl-tRNA(Ser) + AMP + diphosphate + H(+). The catalysed reaction is tRNA(Sec) + L-serine + ATP = L-seryl-tRNA(Sec) + AMP + diphosphate + H(+). The protein operates within aminoacyl-tRNA biosynthesis; selenocysteinyl-tRNA(Sec) biosynthesis; L-seryl-tRNA(Sec) from L-serine and tRNA(Sec): step 1/1. Catalyzes the attachment of serine to tRNA(Ser). Is also able to aminoacylate tRNA(Sec) with serine, to form the misacylated tRNA L-seryl-tRNA(Sec), which will be further converted into selenocysteinyl-tRNA(Sec). This chain is Serine--tRNA ligase, found in Herpetosiphon aurantiacus (strain ATCC 23779 / DSM 785 / 114-95).